A 436-amino-acid chain; its full sequence is p-aminobenzoyl-glutamate hydrolase subunit A (436 aa).

Belongs to the peptidase M20 family. Forms a heterodimer with AbgB. It depends on Mn(2+) as a cofactor.

Functionally, component of the p-aminobenzoyl-glutamate hydrolase multicomponent enzyme system which catalyzes the cleavage of p-aminobenzoyl-glutamate (PABA-GLU) to form p-aminobenzoate (PABA) and glutamate. AbgAB does not degrade dipeptides and the physiological role of abgABT should be clarified. The chain is p-aminobenzoyl-glutamate hydrolase subunit A (abgA) from Escherichia coli (strain K12).